Reading from the N-terminus, the 1027-residue chain is Sodium/potassium-transporting ATPase subunit alpha-1 (1027 aa).

Positions 1–5 are excised as a propeptide; the sequence is MGVGD. Residues 1–10 are compositionally biased toward basic and acidic residues; the sequence is MGVGDGRDQY. Residues 1–39 are disordered; sequence MGVGDGRDQYELAAMSEQSGKKKSKNKKEKKEKDMDELK. The Cytoplasmic portion of the chain corresponds to 6 to 90; it reads GRDQYELAAM…NALTPPPTTP (85 aa). Residue Ser-16 is modified to Phosphoserine; by PKC. Residues 29-39 are compositionally biased toward basic and acidic residues; that stretch reads EKKEKDMDELK. Residues 85–87 form an interaction with phosphoinositide-3 kinase region; that stretch reads PPP. Residues 91–111 form a helical membrane-spanning segment; it reads EWVKFCKQMFGGFSMLLWTGA. The Extracellular segment spans residues 112–134; it reads VLCFLAYGILAAMEDEPANDNLY. A helical membrane pass occupies residues 135 to 155; the sequence is LGVVLSAVVIITGCFSYYQDA. The Cytoplasmic portion of the chain corresponds to 156 to 291; the sequence is KSSKIMDSFK…VGRTPISIEI (136 aa). A disordered region spans residues 217–238; the sequence is DNSSLTGESEPQTRSPDFSNDN. Residues 292–311 traverse the membrane as a helical segment; that stretch reads EHFIHIITGVAVFLGVSFLL. At 312–323 the chain is on the extracellular side; sequence LSLVLGYSWLEA. Residues 324–341 form a helical membrane-spanning segment; that stretch reads VIFLIGIIVANVPEGLLA. Residues 342–776 are Cytoplasmic-facing; sequence TVTVCLTLTA…EEGRLIFDNL (435 aa). Residue Asp-379 is the 4-aspartylphosphate intermediate of the active site. Residue Lys-490 coordinates ATP. Mg(2+)-binding residues include Asp-721 and Asp-725. Residues 777–796 traverse the membrane as a helical segment; sequence KKSIAYTLTSNIPEITPFLF. The Extracellular portion of the chain corresponds to 797–806; sequence FIIANIPLPL. A helical membrane pass occupies residues 807–827; the sequence is GTVTILCIDLGTDMLPAISLA. Residues 828–847 lie on the Cytoplasmic side of the membrane; the sequence is YEAAESDIMKRQPRNPKTDK. The helical transmembrane segment at 848–870 threads the bilayer; that stretch reads LVNERLISIAYGQIGMIQALAGF. Residues 871-922 are Extracellular-facing; sequence FTYFVILAENGFLPPRLLGIRMNWDDKYINDLEDSYGQQWTYEQRKIVEFTC. Residues 923 to 942 form a helical membrane-spanning segment; sequence HTAFFTSIVIVQWADLIICK. Residues 943-955 are Cytoplasmic-facing; it reads TRRNSVFQQGMKN. Ser-947 is subject to Phosphoserine; by PKA. Residues 956 to 974 form a helical membrane-spanning segment; it reads KILIFGLFEETALAAFLSY. Over 975 to 989 the chain is Extracellular; that stretch reads CPGMDVALRMYPLKP. The chain crosses the membrane as a helical span at residues 990–1010; sequence NWWFCAFPYSLLIFIYDEIRK. The Cytoplasmic segment spans residues 1011-1027; it reads LILRRNPGGWMERETYY.

This sequence belongs to the cation transport ATPase (P-type) (TC 3.A.3) family. Type IIC subfamily. The sodium/potassium-transporting ATPase is composed of a catalytic alpha subunit, an auxiliary non-catalytic beta subunit and an additional regulatory subunit.

The protein resides in the cell membrane. It is found in the sarcolemma. It catalyses the reaction K(+)(out) + Na(+)(in) + ATP + H2O = K(+)(in) + Na(+)(out) + ADP + phosphate + H(+). Its function is as follows. This is the catalytic component of the active enzyme, which catalyzes the hydrolysis of ATP coupled with the exchange of sodium and potassium ions across the plasma membrane. This action creates the electrochemical gradient of sodium and potassium ions, providing the energy for active transport of various nutrients. This Catostomus commersonii (White sucker) protein is Sodium/potassium-transporting ATPase subunit alpha-1 (atp1a1).